Consider the following 329-residue polypeptide: MASQLTDAFARKFYYLRLSITDVCNFRCTYCLPDGYKPSGVTNKGFLTVDEIRRVTRAFASLGTEKVRLTGGEPSLRRDFTDIIAAVRENDAIRQIAVTTNGYRLERDVANWRDAGLTGINVSVDSLDARQFHAITGQDKFNQVMAGIDAAFEAGFEKVKVNTVLMRDVNHHQLDTFLNWIQHRPIQLRFIELMETGEGSELFRKHHISGQVLRDELLRRGWIHQLRQRSDGPAQVFCHPDYAGEIGLIMPYEKDFCATCNRLRVSSIGKLHLCLFGEGGVNLRDLLEDDAQQQALEARISAALREKKQTHFLHQNNTGITQNLSYIGG.

Residues 8–234 (AFARKFYYLR…QLRQRSDGPA (227 aa)) form the Radical SAM core domain. Residue R17 coordinates GTP. Residues C24 and C28 each coordinate [4Fe-4S] cluster. Y30 lines the S-adenosyl-L-methionine pocket. Position 31 (C31) interacts with [4Fe-4S] cluster. R68 serves as a coordination point for GTP. Residue G72 participates in S-adenosyl-L-methionine binding. T99 is a binding site for GTP. Position 123 (S123) interacts with S-adenosyl-L-methionine. Residue K160 coordinates GTP. M194 is an S-adenosyl-L-methionine binding site. [4Fe-4S] cluster contacts are provided by C257 and C260. 262 to 264 (RLR) is a binding site for GTP. C274 provides a ligand contact to [4Fe-4S] cluster.

This sequence belongs to the radical SAM superfamily. MoaA family. Monomer and homodimer. The cofactor is [4Fe-4S] cluster.

The enzyme catalyses GTP + AH2 + S-adenosyl-L-methionine = (8S)-3',8-cyclo-7,8-dihydroguanosine 5'-triphosphate + 5'-deoxyadenosine + L-methionine + A + H(+). The protein operates within cofactor biosynthesis; molybdopterin biosynthesis. Functionally, catalyzes the cyclization of GTP to (8S)-3',8-cyclo-7,8-dihydroguanosine 5'-triphosphate. The chain is GTP 3',8-cyclase from Shigella dysenteriae serotype 1 (strain Sd197).